Reading from the N-terminus, the 234-residue chain is Small ribosomal subunit protein uS3 (234 aa).

Residues 39–107 (IRKMLKERLK…EVHLNLVEVR (69 aa)) form the KH type-2 domain. The segment covering 215–227 (QERRLQESGEQRA) has biased composition (basic and acidic residues). The disordered stretch occupies residues 215-234 (QERRLQESGEQRARSGRQAA).

Belongs to the universal ribosomal protein uS3 family. As to quaternary structure, part of the 30S ribosomal subunit. Forms a tight complex with proteins S10 and S14.

Functionally, binds the lower part of the 30S subunit head. Binds mRNA in the 70S ribosome, positioning it for translation. The polypeptide is Small ribosomal subunit protein uS3 (Maricaulis maris (strain MCS10) (Caulobacter maris)).